The following is a 396-amino-acid chain: S-adenosylmethionine synthase (396 aa).

H16 provides a ligand contact to ATP. D18 is a binding site for Mg(2+). A K(+)-binding site is contributed by E44. Residues E57 and Q100 each coordinate L-methionine. The interval 100–110 (QSVDINQGVDR) is flexible loop. Residues 165-167 (DAK), 231-232 (KF), D240, 246-247 (RK), A263, and K267 each bind ATP. An L-methionine-binding site is contributed by D240. K271 is a binding site for L-methionine.

Belongs to the AdoMet synthase family. As to quaternary structure, homotetramer; dimer of dimers. The cofactor is Mg(2+). It depends on K(+) as a cofactor.

It localises to the cytoplasm. The catalysed reaction is L-methionine + ATP + H2O = S-adenosyl-L-methionine + phosphate + diphosphate. It participates in amino-acid biosynthesis; S-adenosyl-L-methionine biosynthesis; S-adenosyl-L-methionine from L-methionine: step 1/1. Catalyzes the formation of S-adenosylmethionine (AdoMet) from methionine and ATP. The overall synthetic reaction is composed of two sequential steps, AdoMet formation and the subsequent tripolyphosphate hydrolysis which occurs prior to release of AdoMet from the enzyme. The protein is S-adenosylmethionine synthase of Azotobacter vinelandii (strain DJ / ATCC BAA-1303).